A 463-amino-acid polypeptide reads, in one-letter code: Glutamate-1-semialdehyde 2,1-aminomutase, chloroplastic (463 aa).

A chloroplast-targeting transit peptide spans 1 to 30 (MQMQLNAKTVQGAFKAQRPRSVRGNVAVRA). N6-(pyridoxal phosphate)lysine is present on K303.

This sequence belongs to the class-III pyridoxal-phosphate-dependent aminotransferase family. HemL subfamily. Homodimer. Requires pyridoxal 5'-phosphate as cofactor.

The protein localises to the plastid. It localises to the chloroplast. It carries out the reaction (S)-4-amino-5-oxopentanoate = 5-aminolevulinate. It participates in porphyrin-containing compound metabolism; protoporphyrin-IX biosynthesis; 5-aminolevulinate from L-glutamyl-tRNA(Glu): step 2/2. The protein operates within porphyrin-containing compound metabolism; chlorophyll biosynthesis. The polypeptide is Glutamate-1-semialdehyde 2,1-aminomutase, chloroplastic (GSA) (Chlamydomonas reinhardtii (Chlamydomonas smithii)).